The primary structure comprises 155 residues: Telokin-like protein 20 homolog (155 aa).

The segment at 109 to 155 is disordered; that stretch reads KRAVAPPHHEPEPVPAEEGAVADRAEPESGDAPPSPKKQKLDEREQD.

In Orgyia pseudotsugata multicapsid polyhedrosis virus (OpMNPV), this protein is Telokin-like protein 20 homolog.